We begin with the raw amino-acid sequence, 85 residues long: COMM domain-containing protein 6 (85 aa).

Residue M1 is modified to N-acetylmethionine. The region spanning 18-85 is the COMM domain; the sequence is QLVDFQWKLG…KEIAAVIETV (68 aa).

The protein belongs to the COMM domain-containing protein 6 family. As to quaternary structure, component of the commander complex consisting of the CCC subcomplex and the retriever subcomplex. Component of the CCC (COMMD/CCDC22/CCDC93) subcomplex consisting of COMMD1, COMMD2, COMMD3, COMMD4, COMMD5, COMMD6, COMMD7, COMMD8, COMMD9, COMMD10, CCDC22 and CCDC93; within the complex forms a heterodimer with COMMD1. May form a homodimer with isoform 1. Interacts with RELA, RELB, NFKB1/p105. Does not interact with NFKBIB. Interacts with CCDC22, CCDC93, SCNN1B, CUL4A. In terms of tissue distribution, ubiquitous. Expressed in brain, heart, skeletal muscle, lung, pancreas, liver, kidney, small intestine and placenta.

The protein localises to the nucleus. Its subcellular location is the cytoplasm. Scaffold protein in the commander complex that is essential for endosomal recycling of transmembrane cargos; the commander complex is composed of the CCC subcomplex and the retriever subcomplex. May modulate activity of cullin-RING E3 ubiquitin ligase (CRL) complexes. Down-regulates activation of NF-kappa-B. Inhibits TNF-induced NFKB1 activation. The protein is COMM domain-containing protein 6 (COMMD6) of Homo sapiens (Human).